Reading from the N-terminus, the 207-residue chain is Protein 6b (207 aa).

Residues 160-183 (GNYTEEGEDDDDEMDDEGEAGGAE) are disordered. The segment covering 164–178 (EEGEDDDDEMDDEGE) has biased composition (acidic residues).

Its function is as follows. Involved in tumor formation and increases auxin and cytokinin effects in host plants. In Agrobacterium tumefaciens (strain Ach5), this protein is Protein 6b (6b).